Consider the following 141-residue polypeptide: Ribonuclease VapC2 (141 aa).

The PINc domain occupies 7–129 (LIDKSALVRL…FDAIAALTGQ (123 aa)). Mg(2+) is bound by residues Asp99, Asp117, and Asp119.

Belongs to the PINc/VapC protein family. Probably active as a homodimer. Mg(2+) serves as cofactor.

Toxic component of a type II toxin-antitoxin (TA) system. Acts as an RNase. All its toxic effects are neutralized by coexpression with cognate antitoxin VapB2. The protein is Ribonuclease VapC2 of Mycobacterium tuberculosis (strain CDC 1551 / Oshkosh).